The primary structure comprises 336 residues: Vacuolar protein sorting-associated protein 26B (336 aa).

A phosphoserine mark is found at Ser302, Ser304, and Ser319.

It belongs to the VPS26 family. As to quaternary structure, component of the heterotrimeric retromer cargo-selective complex (CSC), also described as vacuolar protein sorting subcomplex (VPS), formed by VPS26 (VPS26A or VPS26B), VPS29 and VPS35. The CSC has a highly elongated structure with VPS26 and VPS29 binding independently at opposite distal ends of VPS35 as central platform. The CSC is believed to associate with variable sorting nexins to form functionally distinct retromer complex variants. The originally described SNX-BAR retromer is a pentamer containing the CSC and a heterodimeric membrane-deforming subcomplex formed between SNX1 or SNX2 and SNX5 or SNX6 (also called SNX-BAR subcomplex); the respective CSC and SNX-BAR subcomplexes associate with low affinity. The CSC associates with SNX3 to form a SNX3-retromer complex. The CSC associates with SNX27, the WASH complex and the SNX-BAR subcomplex to form the SNX27-retromer complex. Interacts with VPS29, VPS35, TBC1D5, GOLPH3, SNX27. In terms of tissue distribution, ubiquitously expressed in developing embryo and adult. Highly expressed in brain.

It localises to the cytoplasm. The protein resides in the membrane. The protein localises to the early endosome. Its subcellular location is the late endosome. Functionally, acts as a component of the retromer cargo-selective complex (CSC). The CSC is believed to be the core functional component of retromer or respective retromer complex variants acting to prevent missorting of selected transmembrane cargo proteins into the lysosomal degradation pathway. The recruitment of the CSC to the endosomal membrane involves RAB7A and SNX3. The SNX-BAR retromer mediates retrograde transport of cargo proteins from endosomes to the trans-Golgi network (TGN) and is involved in endosome-to-plasma membrane transport for cargo protein recycling. The SNX3-retromer mediates the retrograde transport of WLS distinct from the SNX-BAR retromer pathway. The SNX27-retromer is believed to be involved in endosome-to-plasma membrane trafficking and recycling of a broad spectrum of cargo proteins. The CSC seems to act as recruitment hub for other proteins, such as the WASH complex and TBC1D5. May be involved in retrograde transport of SORT1 but not of IGF2R. Acts redundantly with VSP26A in SNX-27 mediated endocytic recycling of SLC2A1/GLUT1. This Mus musculus (Mouse) protein is Vacuolar protein sorting-associated protein 26B (Vps26b).